The following is a 417-amino-acid chain: Queuine tRNA-ribosyltransferase accessory subunit 2 (417 aa).

Residues Cys-324, Cys-326, Cys-329, and His-355 each contribute to the Zn(2+) site.

This sequence belongs to the queuine tRNA-ribosyltransferase family. QTRT2 subfamily. As to quaternary structure, heterodimer of a catalytic subunit and an accessory subunit. The cofactor is Zn(2+).

The protein localises to the cytoplasm. Non-catalytic subunit of the queuine tRNA-ribosyltransferase (TGT) that catalyzes the base-exchange of a guanine (G) residue with queuine (Q) at position 34 (anticodon wobble position) in tRNAs with GU(N) anticodons (tRNA-Asp, -Asn, -His and -Tyr), resulting in the hypermodified nucleoside queuosine (7-(((4,5-cis-dihydroxy-2-cyclopenten-1-yl)amino)methyl)-7-deazaguanosine). The polypeptide is Queuine tRNA-ribosyltransferase accessory subunit 2 (Drosophila persimilis (Fruit fly)).